Here is a 37-residue protein sequence, read N- to C-terminus: Large ribosomal subunit protein bL36c (37 aa).

This sequence belongs to the bacterial ribosomal protein bL36 family.

It is found in the plastid. It localises to the organellar chromatophore. The polypeptide is Large ribosomal subunit protein bL36c (Paulinella chromatophora).